A 177-amino-acid chain; its full sequence is Large ribosomal subunit protein uL6 (177 aa).

This sequence belongs to the universal ribosomal protein uL6 family. Part of the 50S ribosomal subunit.

This protein binds to the 23S rRNA, and is important in its secondary structure. It is located near the subunit interface in the base of the L7/L12 stalk, and near the tRNA binding site of the peptidyltransferase center. This is Large ribosomal subunit protein uL6 from Bordetella bronchiseptica (strain ATCC BAA-588 / NCTC 13252 / RB50) (Alcaligenes bronchisepticus).